Consider the following 39-residue polypeptide: Photosystem II reaction center protein Psb30 (39 aa).

A helical transmembrane segment spans residues Ile-12 to Leu-32.

It belongs to the Psb30/Ycf12 family. In terms of assembly, PSII is composed of 1 copy each of membrane proteins PsbA, PsbB, PsbC, PsbD, PsbE, PsbF, PsbH, PsbI, PsbJ, PsbK, PsbL, PsbM, PsbT, PsbX, PsbY, PsbZ, Psb30/Ycf12, peripheral proteins PsbO, CyanoQ (PsbQ), PsbU, PsbV and a large number of cofactors. It forms dimeric complexes.

The protein resides in the cellular thylakoid membrane. Functionally, a core subunit of photosystem II (PSII), probably helps stabilize the reaction center. This chain is Photosystem II reaction center protein Psb30, found in Rippkaea orientalis (strain PCC 8801 / RF-1) (Cyanothece sp. (strain PCC 8801)).